A 196-amino-acid polypeptide reads, in one-letter code: UPF0301 protein BF2109 (196 aa).

Belongs to the UPF0301 (AlgH) family.

The chain is UPF0301 protein BF2109 from Bacteroides fragilis (strain ATCC 25285 / DSM 2151 / CCUG 4856 / JCM 11019 / LMG 10263 / NCTC 9343 / Onslow / VPI 2553 / EN-2).